Reading from the N-terminus, the 345-residue chain is Quinolinate synthase (345 aa).

Positions 69 and 87 each coordinate iminosuccinate. A [4Fe-4S] cluster-binding site is contributed by Cys-132. Residues 158-160 (YVN) and Ser-175 contribute to the iminosuccinate site. Cys-217 is a [4Fe-4S] cluster binding site. Residues 243–245 (HPE) and Thr-260 each bind iminosuccinate. A [4Fe-4S] cluster-binding site is contributed by Cys-303.

The protein belongs to the quinolinate synthase family. Type 2 subfamily. The cofactor is [4Fe-4S] cluster.

It localises to the cytoplasm. The catalysed reaction is iminosuccinate + dihydroxyacetone phosphate = quinolinate + phosphate + 2 H2O + H(+). The protein operates within cofactor biosynthesis; NAD(+) biosynthesis; quinolinate from iminoaspartate: step 1/1. Functionally, catalyzes the condensation of iminoaspartate with dihydroxyacetone phosphate to form quinolinate. The polypeptide is Quinolinate synthase (Agrobacterium fabrum (strain C58 / ATCC 33970) (Agrobacterium tumefaciens (strain C58))).